Here is a 663-residue protein sequence, read N- to C-terminus: Drug sensory protein A (663 aa).

3 consecutive transmembrane segments (helical) span residues 32-52, 165-185, and 199-219; these read LMAA…FWAV, VFIP…GINP, and VTIA…VFNA. The 53-residue stretch at 220–272 folds into the HAMP domain; sequence LTITQPIKELLLGVKNIAAGNFKQRITLPFGGELGELIVNFNEMAERLERYEA. One can recognise a PAS domain in the interval 281-351; sequence EKAKLDTLVS…QPLRELAADQ (71 aa). Residues 429-656 enclose the Histidine kinase domain; it reads NVSHELRTPL…TFWFDLAVYQ (228 aa). At His-432 the chain carries Phosphohistidine; by autocatalysis.

The protein localises to the cell membrane. The catalysed reaction is ATP + protein L-histidine = ADP + protein N-phospho-L-histidine.. This chain is Drug sensory protein A (dspA), found in Synechocystis sp. (strain ATCC 27184 / PCC 6803 / Kazusa).